A 157-amino-acid chain; its full sequence is Large ribosomal subunit protein bL34c (157 aa).

The transit peptide at 1 to 97 (MASLSTSVVA…GQRRRGLVVR (97 aa)) directs the protein to the chloroplast.

Belongs to the bacterial ribosomal protein bL34 family. As to quaternary structure, part of the 50S ribosomal subunit.

It localises to the plastid. The protein localises to the chloroplast. In terms of biological role, this protein binds directly to 23S ribosomal RNA. This is Large ribosomal subunit protein bL34c (RPL34) from Arabidopsis thaliana (Mouse-ear cress).